The following is a 360-amino-acid chain: CFA/I fimbrial subunit E (360 aa).

The protein resides in the fimbrium. The chain is CFA/I fimbrial subunit E (cfaE) from Escherichia coli.